The primary structure comprises 1339 residues: DNA-directed RNA polymerase subunit beta'' (1339 aa).

Positions 226, 299, 306, and 309 each coordinate Zn(2+).

Belongs to the RNA polymerase beta' chain family. RpoC2 subfamily. As to quaternary structure, in plastids the minimal PEP RNA polymerase catalytic core is composed of four subunits: alpha, beta, beta', and beta''. When a (nuclear-encoded) sigma factor is associated with the core the holoenzyme is formed, which can initiate transcription. Zn(2+) is required as a cofactor.

Its subcellular location is the plastid. It localises to the chloroplast. The enzyme catalyses RNA(n) + a ribonucleoside 5'-triphosphate = RNA(n+1) + diphosphate. DNA-dependent RNA polymerase catalyzes the transcription of DNA into RNA using the four ribonucleoside triphosphates as substrates. This Cycas taitungensis (Prince sago) protein is DNA-directed RNA polymerase subunit beta''.